A 336-amino-acid chain; its full sequence is Tryptophan--tRNA ligase (336 aa).

Residues 16 to 18 (QPT) and 24 to 25 (GN) each bind ATP. The 'HIGH' region signature appears at 17 to 25 (PTGQLHLGN). An L-tryptophan-binding site is contributed by aspartate 140. ATP-binding positions include 152-154 (GED), valine 191, and 200-204 (KMSKS). Residues 200–204 (KMSKS) carry the 'KMSKS' region motif.

Belongs to the class-I aminoacyl-tRNA synthetase family. Homodimer.

It localises to the cytoplasm. It carries out the reaction tRNA(Trp) + L-tryptophan + ATP = L-tryptophyl-tRNA(Trp) + AMP + diphosphate + H(+). Functionally, catalyzes the attachment of tryptophan to tRNA(Trp). This Gloeobacter violaceus (strain ATCC 29082 / PCC 7421) protein is Tryptophan--tRNA ligase.